Reading from the N-terminus, the 318-residue chain is HPr kinase/phosphorylase (318 aa).

Catalysis depends on residues His146 and Lys167. 161–168 is an ATP binding site; that stretch reads GESGLGKS. Ser168 lines the Mg(2+) pocket. Asp185 functions as the Proton acceptor; for phosphorylation activity. Proton donor; for dephosphorylation activity in the catalytic mechanism. The tract at residues 209–218 is important for the catalytic mechanism of both phosphorylation and dephosphorylation; sequence LEVRGIGLLD. Residue Glu210 participates in Mg(2+) binding. Residue Arg252 is part of the active site. Residues 273-278 are important for the catalytic mechanism of dephosphorylation; sequence QVVAGR.

It belongs to the HPrK/P family. As to quaternary structure, homohexamer. The cofactor is Mg(2+).

It catalyses the reaction [HPr protein]-L-serine + ATP = [HPr protein]-O-phospho-L-serine + ADP + H(+). The enzyme catalyses [HPr protein]-O-phospho-L-serine + phosphate + H(+) = [HPr protein]-L-serine + diphosphate. Functionally, catalyzes the ATP- as well as the pyrophosphate-dependent phosphorylation of a specific serine residue in HPr, a phosphocarrier protein of the phosphoenolpyruvate-dependent sugar phosphotransferase system (PTS). HprK/P also catalyzes the pyrophosphate-producing, inorganic phosphate-dependent dephosphorylation (phosphorolysis) of seryl-phosphorylated HPr (P-Ser-HPr). The sequence is that of HPr kinase/phosphorylase from Acidovorax sp. (strain JS42).